The primary structure comprises 231 residues: LexA repressor (231 aa).

The disordered stretch occupies residues 1-24 (MTDRKEHKMKPGRRPTEGMTPSQE). Positions 43–62 (VKEIAEALGMKTPSAHEQVQ) form a DNA-binding region, H-T-H motif. Active-site for autocatalytic cleavage activity residues include Ser-146 and Lys-183.

This sequence belongs to the peptidase S24 family. In terms of assembly, homodimer.

It carries out the reaction Hydrolysis of Ala-|-Gly bond in repressor LexA.. In terms of biological role, represses a number of genes involved in the response to DNA damage (SOS response), including recA and lexA. In the presence of single-stranded DNA, RecA interacts with LexA causing an autocatalytic cleavage which disrupts the DNA-binding part of LexA, leading to derepression of the SOS regulon and eventually DNA repair. This chain is LexA repressor, found in Magnetococcus marinus (strain ATCC BAA-1437 / JCM 17883 / MC-1).